We begin with the raw amino-acid sequence, 788 residues long: Protein HHLF1 (788 aa).

Disordered stretches follow at residues 1–82 (MAQR…NFWH), 366–385 (TGTA…ETEA), and 609–663 (IHKK…SRLP). Residues 16–25 (RGRGAGGPSG) are compositionally biased toward gly residues. Residues 26–56 (VGSSPPSSCVPMGAPSTAGTGASAAATTTPG) are compositionally biased toward low complexity. The interval 74–248 (SGNNSNFWHG…HGAGEVVRLY (175 aa)) is RNA-binding. A compositionally biased stretch (basic and acidic residues) spans 650–659 (LRRDDEDWKP). The interval 671–788 (LDETFWVLGS…IATHYHYNAQ (118 aa)) is interaction with host EIF2AK2/PKR.

Belongs to the herpesviridae US22 family. In terms of assembly, interacts with host EIF2AK2/PKR; this interaction retains EIF2AK2 to the host nucleus and prevents its activation. Interaction (via N-terminus) with host BECN1; this interaction inhibits host autophagy. Interacts with the viral DNA polymerase accessory subunit UL44. Interacts with host HSPA5.

It localises to the virion. It is found in the host cytoplasm. The protein localises to the host nucleus. In terms of biological role, inhibits the establishment of the antiviral state and the integrated stress response (ISR) in the infected cell. Prevents the phosphorylation of the host eukaryotic translation initiation factor eIF-2alpha/EIF2S1 and thus the shutoff of viral and cellular protein synthesis by directly interacting with EIF2AK2/PKR. Prevents stress granule formation in response to eIF-2alpha/EIF2S1 phosphorylation, thereby rescuing viral replication and protein synthesis. Also inhibits host autophagy by interacting with host Beclin-1/BECN1. This is Protein HHLF1 (TRS1) from Homo sapiens (Human).